The following is a 63-amino-acid chain: Venom peptide 2a (63 aa).

A signal peptide spans 1–22 (MRGTSFILFAVVVILGFLNANA). AXPX repeat units follow at residues 22–25 (AEPL), 26–29 (ANPA), 32–35 (ANPD), 38–41 (ANPD), and 44–47 (ANPE). The propeptide occupies 23-48 (EPLANPAPLANPDPLANPDPLANPEA). Position 62 is a leucine amide (L62).

As to expression, expressed by the venom gland.

Its subcellular location is the secreted. It localises to the target cell membrane. Antimicrobial peptide. Shows activities against Gram-positive bacteria (S.aureus MIC=50 uM and 200 ug/ml, and B.subtilis MIC=200 ug/ml), Gram-negative bacterium E.coli (MIC=100 uM and 200 ug/ml) and fungi (B.cinerea MIC=5 uM, S.cerevisiae MIC=128 ug/ml, S.pombe MIC=128 ug/ml, A.nidulans MIC=128 ug/ml, and C.albicans MIC=64-100 uM). Shows cytolytic activity against insect cell lines. Its hemolytic activity is controversial, as Baek and colleagues report no activity while Bea and colleagues note a hemolytic activity. In vivo, peptide injection in the vicinity of the head and thorax of lepidopteran larvae induces feeding disorder followed by death due to starvation. Is weakly lethal when tested on water flies (D.magna), but is not lethal on lady beetles (H.convergens). The chain is Venom peptide 2a from Eumenes pomiformis (Potter wasp).